We begin with the raw amino-acid sequence, 150 residues long: 1,4-dihydroxy-2-naphthoyl-CoA hydrolase (150 aa).

Residue Asp-19 is part of the active site.

Belongs to the 4-hydroxybenzoyl-CoA thioesterase family. DHNA-CoA hydrolase subfamily.

It carries out the reaction 1,4-dihydroxy-2-naphthoyl-CoA + H2O = 1,4-dihydroxy-2-naphthoate + CoA + H(+). It functions in the pathway cofactor biosynthesis; phylloquinone biosynthesis. It participates in quinol/quinone metabolism; 1,4-dihydroxy-2-naphthoate biosynthesis; 1,4-dihydroxy-2-naphthoate from chorismate: step 7/7. Its function is as follows. Catalyzes the hydrolysis of 1,4-dihydroxy-2-naphthoyl-CoA (DHNA-CoA) to 1,4-dihydroxy-2-naphthoate (DHNA), a reaction involved in phylloquinone (vitamin K1) biosynthesis. This is 1,4-dihydroxy-2-naphthoyl-CoA hydrolase from Prochlorococcus marinus (strain MIT 9312).